A 559-amino-acid polypeptide reads, in one-letter code: Potassium-transporting ATPase potassium-binding subunit (559 aa).

13 helical membrane passes run Gly5 to Ser25, Leu27 to Trp47, Leu63 to Trp83, Gly132 to Ile152, Leu170 to Ile190, Leu253 to Ala273, Leu283 to Val303, Phe327 to Val347, Ala356 to Val376, Gly379 to Gly399, Met416 to Met436, Leu484 to Ala504, and Gly524 to Ile544.

It belongs to the KdpA family. As to quaternary structure, the system is composed of three essential subunits: KdpA, KdpB and KdpC.

It is found in the cell inner membrane. Its function is as follows. Part of the high-affinity ATP-driven potassium transport (or Kdp) system, which catalyzes the hydrolysis of ATP coupled with the electrogenic transport of potassium into the cytoplasm. This subunit binds the periplasmic potassium ions and delivers the ions to the membrane domain of KdpB through an intramembrane tunnel. The polypeptide is Potassium-transporting ATPase potassium-binding subunit (Salmonella dublin (strain CT_02021853)).